The primary structure comprises 265 residues: Serine protease 1 (265 aa).

Positions 1–21 are cleaved as a signal peptide; it reads MKLFVFLALAVAAATAVPAPA. Positions 22–35 are excised as a propeptide; it reads QKLTPTPIKDIQGR. The 227-residue stretch at 36–262 folds into the Peptidase S1 domain; the sequence is ITNGYPAYEG…YLDWIRDNTG (227 aa). Cys63 and Cys79 are oxidised to a cystine. Active-site charge relay system residues include His78 and Asp123. 2 disulfide bridges follow: Cys189-Cys201 and Cys211-Cys239. The active-site Charge relay system is the Ser215.

It belongs to the peptidase S1 family. Abundantly expressed in the larval gut.

Functionally, major function may be to aid in digestion. The chain is Serine protease 1 from Drosophila melanogaster (Fruit fly).